We begin with the raw amino-acid sequence, 636 residues long: 1-deoxy-D-xylulose-5-phosphate synthase (636 aa).

Thiamine diphosphate is bound by residues H72 and 113-115; that span reads GHA. Residue D144 participates in Mg(2+) binding. Thiamine diphosphate-binding positions include 145–146, N174, Y287, and E370; that span reads GS. N174 serves as a coordination point for Mg(2+).

This sequence belongs to the transketolase family. DXPS subfamily. As to quaternary structure, homodimer. Mg(2+) serves as cofactor. Requires thiamine diphosphate as cofactor.

It carries out the reaction D-glyceraldehyde 3-phosphate + pyruvate + H(+) = 1-deoxy-D-xylulose 5-phosphate + CO2. It functions in the pathway metabolic intermediate biosynthesis; 1-deoxy-D-xylulose 5-phosphate biosynthesis; 1-deoxy-D-xylulose 5-phosphate from D-glyceraldehyde 3-phosphate and pyruvate: step 1/1. Functionally, catalyzes the acyloin condensation reaction between C atoms 2 and 3 of pyruvate and glyceraldehyde 3-phosphate to yield 1-deoxy-D-xylulose-5-phosphate (DXP). The chain is 1-deoxy-D-xylulose-5-phosphate synthase from Synechococcus sp. (strain ATCC 27144 / PCC 6301 / SAUG 1402/1) (Anacystis nidulans).